Here is a 255-residue protein sequence, read N- to C-terminus: 5'-nucleotidase SurE (255 aa).

A divalent metal cation is bound by residues aspartate 8, aspartate 9, serine 40, and asparagine 95.

Belongs to the SurE nucleotidase family. Requires a divalent metal cation as cofactor.

The protein resides in the cytoplasm. The catalysed reaction is a ribonucleoside 5'-phosphate + H2O = a ribonucleoside + phosphate. Its function is as follows. Nucleotidase that shows phosphatase activity on nucleoside 5'-monophosphates. The chain is 5'-nucleotidase SurE from Solidesulfovibrio magneticus (strain ATCC 700980 / DSM 13731 / RS-1) (Desulfovibrio magneticus).